A 284-amino-acid chain; its full sequence is Pantothenate synthetase (284 aa).

31 to 38 (MGNLHAGH) is a binding site for ATP. Residue His-38 is the Proton donor of the active site. Residue Gln-62 coordinates (R)-pantoate. Residue Gln-62 coordinates beta-alanine. Residue 150–153 (GKKD) coordinates ATP. Gln-156 provides a ligand contact to (R)-pantoate. Residues Val-179 and 187–190 (MSSR) each bind ATP.

The protein belongs to the pantothenate synthetase family. Homodimer.

The protein resides in the cytoplasm. It carries out the reaction (R)-pantoate + beta-alanine + ATP = (R)-pantothenate + AMP + diphosphate + H(+). The protein operates within cofactor biosynthesis; (R)-pantothenate biosynthesis; (R)-pantothenate from (R)-pantoate and beta-alanine: step 1/1. Catalyzes the condensation of pantoate with beta-alanine in an ATP-dependent reaction via a pantoyl-adenylate intermediate. This Xanthomonas campestris pv. campestris (strain 8004) protein is Pantothenate synthetase.